A 293-amino-acid chain; its full sequence is Nucleotide-binding protein BCG9842_B5683 (293 aa).

ATP is bound at residue 14–21 (GMSGAGKT). A GTP-binding site is contributed by 65–68 (DLRG).

The protein belongs to the RapZ-like family.

In terms of biological role, displays ATPase and GTPase activities. This chain is Nucleotide-binding protein BCG9842_B5683, found in Bacillus cereus (strain G9842).